The following is a 581-amino-acid chain: Dehydrocurvularin exporter (581 aa).

A compositionally biased stretch (polar residues) spans 1-10; the sequence is MTDSPSLESN. The tract at residues 1–47 is disordered; the sequence is MTDSPSLESNNKSDMDTPRPPASSHDEHDAAESVSEKQDSATTSPTG. N-linked (GlcNAc...) asparagine glycosylation is present at Asn-11. Residues 24–39 show a composition bias toward basic and acidic residues; that stretch reads SHDEHDAAESVSEKQD. Transmembrane regions (helical) follow at residues 61 to 81, 96 to 116, 126 to 146, 159 to 179, 184 to 204, 215 to 235, 251 to 271, 288 to 308, 330 to 350, 363 to 383, 392 to 412, 424 to 444, 456 to 476, and 527 to 547; these read LVMFTIFVSTILVSLEIGIIA, DVGWYGSATFILAAAASPLWG, WVYLSAVGIFLVGSIVAAAAP, GWGASGVLGGTLIVINYVAPP, LLIGTWMAVFMMSTILGPVIG, WCFWINLPVGGPIVVLLLLFL, IILNLDIPGFCLLLVSLVCLT, VIATLVLWILLTIGFFIVEWL, IFCLVSYAALYQVMFYLPIYF, VNTLPFLAFFALGAMVSGGAI, YELAGALIMTAGMALIYILDV, VLFGFGIGLCNQVPMTAVQGF, IMVMCQTLSGAYFVAIAQSLF, and VFAFSLACAAFSVILTALIPF. The disordered stretch occupies residues 552 to 581; it reads DHEKKPSKDAMASDEVKASEEVQQEKKVTV. Residues 565 to 581 show a composition bias toward basic and acidic residues; it reads DEVKASEEVQQEKKVTV.

The protein belongs to the major facilitator superfamily. TCR/Tet family.

Its subcellular location is the cell membrane. Its function is as follows. Efflux pump that is probably involved in the export of dehydrocurvularin. This is Dehydrocurvularin exporter from Alternaria cinerariae.